Here is a 224-residue protein sequence, read N- to C-terminus: Flagellar L-ring protein (224 aa).

The signal sequence occupies residues 1-15 (MIKYIALASVVLLVG). The N-palmitoyl cysteine moiety is linked to residue Cys16. A lipid anchor (S-diacylglycerol cysteine) is attached at Cys16.

Belongs to the FlgH family. As to quaternary structure, the basal body constitutes a major portion of the flagellar organelle and consists of four rings (L,P,S, and M) mounted on a central rod.

The protein localises to the cell outer membrane. Its subcellular location is the bacterial flagellum basal body. Its function is as follows. Assembles around the rod to form the L-ring and probably protects the motor/basal body from shearing forces during rotation. This Shewanella frigidimarina (strain NCIMB 400) protein is Flagellar L-ring protein.